Here is a 586-residue protein sequence, read N- to C-terminus: MNFNYHFIWSLVILSQISQVQAGFGDPREALAEIQQKHGKPCDCAGGYVSSPPINSLTTVSCSTHTAYSVTNSLKWQCVSTPTTPSNTHIGSCPGECNTISYDSVHASCYNHYQQCNIGNKTYLTATITGDRTPAIGDGNVPTVLGTSHNLITAGCPNGKKGQVVCWNSRPSVHISDGGGPQDKARDIIVNKKFEELHRSLFPELSYHPLALPEARGKEKIDAHTLDLLATVHSLLNASQPSLAEDCWLCLQSGDPVPLALPYNDTLCSNFACLSNHSCPLTPPFLVQPFNFTDSNCLYAHYQNNSFDIDVGLASFTNCSSYYNVSTASKPSNSLCAPNSSVFVCGNNKAYTYLPTNWTGSCVLATLLPDIDIIPGSEPVPIPAIDHFLGKAKRAIQLIPLFVGLGITTAVSTGAAGLGVSITQYTKLSHQLISDVQAISSTIQDLQDQVDSLAEVVLQNRRGLDLLTAEQGGICLALQEKCCFYANKSGIVRDKIKNLQDDLERRRRQLIDNPFWTSFHGFLPYVMPLLGPLLCLLLVLSFGPIIFNKLMTFIKHQIESIQAKPIQVHYHRLEQEDSGGSYLTLT.

Positions 1–22 (MNFNYHFIWSLVILSQISQVQA) are cleaved as a signal peptide. Residues 23-526 (GFGDPREALA…TSFHGFLPYV (504 aa)) lie on the Extracellular side of the membrane. Residues Asn120 and Asn237 are each glycosylated (N-linked (GlcNAc...) asparagine; by host). The short motif at 247–250 (CWLC) is the CXXC element. Cystine bridges form between Cys247/Cys250, Cys247/Cys483, and Cys475/Cys482. N-linked (GlcNAc...) asparagine; by host glycosylation is found at Asn264, Asn276, Asn291, Asn304, Asn318, Asn324, Asn339, and Asn357. Residues 398 to 418 (LIPLFVGLGITTAVSTGAAGL) form a fusion peptide region. 2 coiled-coil regions span residues 419–469 (GVSI…LLTA) and 479–515 (QEKCCFYANKSGIVRDKIKNLQDDLERRRRQLIDNPF). The immunosuppression stretch occupies residues 458–474 (LQNRRGLDLLTAEQGGI). Positions 475–483 (CLALQEKCC) match the CX6CC motif. Asn487 carries an N-linked (GlcNAc...) asparagine; by host glycan. Residues 527–547 (MPLLGPLLCLLLVLSFGPIIF) form a helical membrane-spanning segment. Residues 548-586 (NKLMTFIKHQIESIQAKPIQVHYHRLEQEDSGGSYLTLT) lie on the Cytoplasmic side of the membrane. Positions 570 to 573 (YHRL) match the YXXL motif; contains endocytosis signal motif.

The mature envelope protein (Env) consists of a trimer of SU-TM heterodimers attached by a labile interchain disulfide bond. Post-translationally, specific enzymatic cleavages in vivo yield mature proteins. Envelope glycoproteins are synthesized as an inactive precursor that is N-glycosylated and processed likely by host cell furin or by a furin-like protease in the Golgi to yield the mature SU and TM proteins. The cleavage site between SU and TM requires the minimal sequence [KR]-X-[KR]-R. The R-peptide is released from the C-terminus of the cytoplasmic tail of the TM protein upon particle formation as a result of proteolytic cleavage by the viral protease. Cleavage of this peptide is required for TM to become fusogenic. The CXXC motif is highly conserved across a broad range of retroviral envelope proteins. It is thought to participate in the formation of a labile disulfide bond possibly with the CX6CC motif present in the transmembrane protein. Isomerization of the intersubunit disulfide bond to an SU intrachain disulfide bond is thought to occur upon receptor recognition in order to allow membrane fusion.

The protein resides in the virion membrane. It localises to the host cell membrane. The surface protein (SU) attaches the virus to the host cell by binding to its receptor. This interaction triggers the refolding of the transmembrane protein (TM) and is thought to activate its fusogenic potential by unmasking its fusion peptide. Fusion occurs at the host cell plasma membrane. Functionally, the transmembrane protein (TM) acts as a class I viral fusion protein. Under the current model, the protein has at least 3 conformational states: pre-fusion native state, pre-hairpin intermediate state, and post-fusion hairpin state. During viral and target cell membrane fusion, the coiled coil regions (heptad repeats) assume a trimer-of-hairpins structure, positioning the fusion peptide in close proximity to the C-terminal region of the ectodomain. The formation of this structure appears to drive apposition and subsequent fusion of viral and target cell membranes. Membranes fusion leads to delivery of the nucleocapsid into the cytoplasm. The sequence is that of Envelope glycoprotein (env) from Mason-Pfizer monkey virus (MPMV).